The sequence spans 207 residues: Riboflavin synthase (207 aa).

Lumazine-binding repeat units lie at residues 1–94 (MFTG…LGGH) and 95–191 (IVQG…INYL). 2,4-dihydroxypteridine contacts are provided by residues 4-6 (GLV), 45-47 (CLT), 59-64 (DVSPET), 98-100 (GHV), Lys133, 142-144 (SLT), and 156-161 (NIIPHT).

In terms of assembly, homotrimer.

It catalyses the reaction 2 6,7-dimethyl-8-(1-D-ribityl)lumazine + H(+) = 5-amino-6-(D-ribitylamino)uracil + riboflavin. The protein operates within cofactor biosynthesis; riboflavin biosynthesis; riboflavin from 2-hydroxy-3-oxobutyl phosphate and 5-amino-6-(D-ribitylamino)uracil: step 2/2. Functionally, catalyzes the dismutation of two molecules of 6,7-dimethyl-8-ribityllumazine, resulting in the formation of riboflavin and 5-amino-6-(D-ribitylamino)uracil. The chain is Riboflavin synthase (ribE) from Aquifex aeolicus (strain VF5).